Consider the following 334-residue polypeptide: Ferrochelatase 1 (334 aa).

Fe cation contacts are provided by histidine 201 and glutamate 282.

Belongs to the ferrochelatase family.

Its subcellular location is the cytoplasm. It catalyses the reaction heme b + 2 H(+) = protoporphyrin IX + Fe(2+). It functions in the pathway porphyrin-containing compound metabolism; protoheme biosynthesis; protoheme from protoporphyrin-IX: step 1/1. Its function is as follows. Catalyzes the ferrous insertion into protoporphyrin IX. The polypeptide is Ferrochelatase 1 (Shewanella oneidensis (strain ATCC 700550 / JCM 31522 / CIP 106686 / LMG 19005 / NCIMB 14063 / MR-1)).